Consider the following 67-residue polypeptide: Neurotoxin Cex10 (67 aa).

The LCN-type CS-alpha/beta domain maps to 1–65; that stretch reads KDGYLVEVTG…TWPLPNKSCG (65 aa). 4 cysteine pairs are disulfide-bonded: Cys-11/Cys-64, Cys-15/Cys-40, Cys-24/Cys-45, and Cys-28/Cys-47. Cys-64 bears the Cysteine amide mark. Positions 65–67 are excised as a propeptide; the sequence is GKK.

This sequence belongs to the long (4 C-C) scorpion toxin superfamily. Sodium channel inhibitor family. Beta subfamily. As to expression, expressed by the venom gland.

Its subcellular location is the secreted. Its function is as follows. Beta toxins bind voltage-independently at site-4 of sodium channels (Nav) and shift the voltage of activation toward more negative potentials thereby affecting sodium channel activation and promoting spontaneous and repetitive firing. The polypeptide is Neurotoxin Cex10 (Centruroides exilicauda (Bark scorpion)).